We begin with the raw amino-acid sequence, 261 residues long: uncharacterized protein (261 aa).

An N-terminal signal peptide occupies residues 1–22 (MIHSKKLTLGICLVLLIILIGG). A lipid anchor (N-palmitoyl cysteine) is attached at Cys23. Cys23 is lipidated: S-diacylglycerol cysteine.

Belongs to the staphylococcal tandem lipoprotein family.

The protein localises to the cell membrane. This is an uncharacterized protein from Staphylococcus aureus (strain NCTC 8325 / PS 47).